The sequence spans 613 residues: Dihydroxy-acid dehydratase (613 aa).

Aspartate 81 lines the Mg(2+) pocket. Residue cysteine 122 coordinates [2Fe-2S] cluster. Positions 123 and 124 each coordinate Mg(2+). N6-carboxylysine is present on lysine 124. Cysteine 195 contacts [2Fe-2S] cluster. Residue glutamate 491 coordinates Mg(2+). Residue serine 517 is the Proton acceptor of the active site.

Belongs to the IlvD/Edd family. As to quaternary structure, homodimer. The cofactor is [2Fe-2S] cluster. Requires Mg(2+) as cofactor.

It catalyses the reaction (2R)-2,3-dihydroxy-3-methylbutanoate = 3-methyl-2-oxobutanoate + H2O. The enzyme catalyses (2R,3R)-2,3-dihydroxy-3-methylpentanoate = (S)-3-methyl-2-oxopentanoate + H2O. Its pathway is amino-acid biosynthesis; L-isoleucine biosynthesis; L-isoleucine from 2-oxobutanoate: step 3/4. It functions in the pathway amino-acid biosynthesis; L-valine biosynthesis; L-valine from pyruvate: step 3/4. Its function is as follows. Functions in the biosynthesis of branched-chain amino acids. Catalyzes the dehydration of (2R,3R)-2,3-dihydroxy-3-methylpentanoate (2,3-dihydroxy-3-methylvalerate) into 2-oxo-3-methylpentanoate (2-oxo-3-methylvalerate) and of (2R)-2,3-dihydroxy-3-methylbutanoate (2,3-dihydroxyisovalerate) into 2-oxo-3-methylbutanoate (2-oxoisovalerate), the penultimate precursor to L-isoleucine and L-valine, respectively. The protein is Dihydroxy-acid dehydratase of Buchnera aphidicola subsp. Schlechtendalia chinensis.